The sequence spans 332 residues: Abscisic acid-inducible protein kinase (332 aa).

Residues 1–8 (GSGNFGVA) and lysine 23 contribute to the ATP site. The region spanning 1–250 (GSGNFGVAKL…IPEIKNHPWF (250 aa)) is the Protein kinase domain. Aspartate 113 (proton acceptor) is an active-site residue.

This sequence belongs to the protein kinase superfamily. Ser/Thr protein kinase family. In terms of processing, autophosphorylated.

It catalyses the reaction L-seryl-[protein] + ATP = O-phospho-L-seryl-[protein] + ADP + H(+). It carries out the reaction L-threonyl-[protein] + ATP = O-phospho-L-threonyl-[protein] + ADP + H(+). In terms of biological role, involved in water-stress responses. The protein is Abscisic acid-inducible protein kinase of Triticum aestivum (Wheat).